A 276-amino-acid polypeptide reads, in one-letter code: Putative pyruvate, phosphate dikinase regulatory protein 2 (276 aa).

146–153 contributes to the ADP binding site; it reads GVSRTSKT.

Belongs to the pyruvate, phosphate/water dikinase regulatory protein family. PDRP subfamily.

It catalyses the reaction N(tele)-phospho-L-histidyl/L-threonyl-[pyruvate, phosphate dikinase] + ADP = N(tele)-phospho-L-histidyl/O-phospho-L-threonyl-[pyruvate, phosphate dikinase] + AMP + H(+). The catalysed reaction is N(tele)-phospho-L-histidyl/O-phospho-L-threonyl-[pyruvate, phosphate dikinase] + phosphate + H(+) = N(tele)-phospho-L-histidyl/L-threonyl-[pyruvate, phosphate dikinase] + diphosphate. Bifunctional serine/threonine kinase and phosphorylase involved in the regulation of the pyruvate, phosphate dikinase (PPDK) by catalyzing its phosphorylation/dephosphorylation. This Enterococcus faecalis (strain ATCC 700802 / V583) protein is Putative pyruvate, phosphate dikinase regulatory protein 2.